Reading from the N-terminus, the 330-residue chain is GLPRVAVDLVAPPLVHPHSQVAAGAPKVVQFRMSIEEKKMVADDDGTTAQAMTFNGSVPGPTLVVHEGDYIELTLVNPATNSMPHNVDFHAATGALGGAGLTQVVPGQEAVLRFKADRSGTFVYHCAPAGMVPWHVVSGMNGALMVLPRDGLRDAAGAALAYDRVYTIGESDLYVPKAADGNYSDYPALASAYADTVAVMRTLTPSHAVFNGAVGALTGANALTAAVGESVLIIHSQANRDSRPHLIGGHGDWVWTTGKFANPPQLNMETWFIPGGSAAAALYTFKQPGTYAYLSHNLIEAMELGAAAQASVEGQWDDDLMTSVAAPGPA.

2 Plastocyanin-like domains span residues 1–165 (GLPR…YDRV) and 166–330 (YTIG…PGPA). Residues histidine 85, histidine 90, histidine 125, cysteine 126, histidine 135, methionine 140, and histidine 296 each coordinate Cu cation.

Belongs to the multicopper oxidase family. In terms of assembly, homotrimer. Requires Cu(2+) as cofactor. Cu(+) is required as a cofactor. It depends on FAD as a cofactor.

It is found in the periplasm. It catalyses the reaction nitric oxide + Fe(III)-[cytochrome c] + H2O = Fe(II)-[cytochrome c] + nitrite + 2 H(+). Its pathway is nitrogen metabolism; nitrate reduction (denitrification); dinitrogen from nitrate: step 2/4. The protein is Copper-containing nitrite reductase (nirK) of Alcaligenes xylosoxydans xylosoxydans (Achromobacter xylosoxidans).